Consider the following 464-residue polypeptide: NADH dehydrogenase [ubiquinone] flavoprotein 1, mitochondrial (464 aa).

Residues 1–20 constitute a mitochondrion transit peptide; the sequence is MLAARHFLGGLVPVRVSVRF. The residue at position 81 (Lys-81) is an N6-acetyllysine; alternate. Lys-81 is modified (N6-succinyllysine; alternate). An NADH-binding site is contributed by 87 to 96; that stretch reads GRGGAGFPTG. Lys-104 carries the post-translational modification N6-acetyllysine. Residue 199 to 247 coordinates FMN; sequence RGAGAYICGEETALIESIEGKQGKPRLKPPFPADVGVFGCPTTVANVET. Arg-257 carries the post-translational modification Omega-N-methylarginine. At Lys-375 the chain carries N6-acetyllysine. 4 residues coordinate [4Fe-4S] cluster: Cys-379, Cys-382, Cys-385, and Cys-425.

Belongs to the complex I 51 kDa subunit family. Core subunit of respiratory chain NADH dehydrogenase (Complex I) which is composed of 45 different subunits. This is a component of the flavoprotein-sulfur (FP) fragment of the enzyme. Interacts with RAB5IF. It depends on FMN as a cofactor. Requires [4Fe-4S] cluster as cofactor.

The protein resides in the mitochondrion inner membrane. The catalysed reaction is a ubiquinone + NADH + 5 H(+)(in) = a ubiquinol + NAD(+) + 4 H(+)(out). In terms of biological role, core subunit of the mitochondrial membrane respiratory chain NADH dehydrogenase (Complex I) which catalyzes electron transfer from NADH through the respiratory chain, using ubiquinone as an electron acceptor. Part of the peripheral arm of the enzyme, where the electrons from NADH are accepted by flavin mononucleotide (FMN) and then passed along a chain of iron-sulfur clusters by electron tunnelling to the final acceptor ubiquinone. Contains FMN, which is the initial electron acceptor as well as one iron-sulfur cluster. The polypeptide is NADH dehydrogenase [ubiquinone] flavoprotein 1, mitochondrial (Mus musculus (Mouse)).